Reading from the N-terminus, the 200-residue chain is Phospholipase A2 inhibitor gamma subunit B (200 aa).

The N-terminal stretch at 1-19 is a signal peptide; the sequence is MKSFLFCCLLGTFLAIGMC. Intrachain disulfides connect C22/C46, C25/C32, C39/C67, C73/C94, C95/C100, C120/C145, C138/C165, and C171/C191. N33 is a glycosylation site (N-linked (GlcNAc...) asparagine).

Belongs to the CNF-like-inhibitor family. Heterodimer of subunit A and subunit B. Expressed by the liver.

The protein localises to the secreted. Its function is as follows. Inhibits the enzymatic activity of phospholipase A2 (PA2). In Gloydius brevicaudus siniticus (Chinese mamushi), this protein is Phospholipase A2 inhibitor gamma subunit B.